A 346-amino-acid polypeptide reads, in one-letter code: Acetyl-coenzyme A carboxylase carboxyl transferase subunit beta (346 aa).

In terms of domain architecture, CoA carboxyltransferase N-terminal spans 24-292 (LWIKCPKSGD…LPEVEPIAVA (269 aa)). Residues 300–311 (AEAEAAPDEVVE) show a composition bias toward acidic residues. A disordered region spans residues 300–346 (AEAEAAPDEVVEVEAPAVDEIVEEKPAATKAKPRSKAKSKAAPKTDE). The segment covering 330–340 (AKPRSKAKSKA) has biased composition (basic residues).

Belongs to the AccD/PCCB family. Acetyl-CoA carboxylase is a heterohexamer composed of biotin carboxyl carrier protein (AccB), biotin carboxylase (AccC) and two subunits each of ACCase subunit alpha (AccA) and ACCase subunit beta (AccD).

Its subcellular location is the cytoplasm. The catalysed reaction is N(6)-carboxybiotinyl-L-lysyl-[protein] + acetyl-CoA = N(6)-biotinyl-L-lysyl-[protein] + malonyl-CoA. Its pathway is lipid metabolism; malonyl-CoA biosynthesis; malonyl-CoA from acetyl-CoA: step 1/1. Component of the acetyl coenzyme A carboxylase (ACC) complex. Biotin carboxylase (BC) catalyzes the carboxylation of biotin on its carrier protein (BCCP) and then the CO(2) group is transferred by the transcarboxylase to acetyl-CoA to form malonyl-CoA. The protein is Acetyl-coenzyme A carboxylase carboxyl transferase subunit beta of Hirschia baltica (strain ATCC 49814 / DSM 5838 / IFAM 1418).